The primary structure comprises 270 residues: FKBP-type peptidyl-prolyl cis-trans isomerase FkpA (270 aa).

The N-terminal stretch at 1-25 (MKSLFKVTLLATTMAVALHAPITFA) is a signal peptide. A PPIase FKBP-type domain is found at 164–249 (SDTVVVNYKG…VFDVELLDVK (86 aa)).

This sequence belongs to the FKBP-type PPIase family.

The protein resides in the periplasm. The enzyme catalyses [protein]-peptidylproline (omega=180) = [protein]-peptidylproline (omega=0). Functionally, PPIases accelerate the folding of proteins. It catalyzes the cis-trans isomerization of proline imidic peptide bonds in oligopeptides. The sequence is that of FKBP-type peptidyl-prolyl cis-trans isomerase FkpA (fkpA) from Escherichia coli (strain K12).